The chain runs to 63 residues: 2-hydroxymuconate tautomerase (63 aa).

The Proton acceptor; via imino nitrogen role is filled by Pro2.

The protein belongs to the 4-oxalocrotonate tautomerase family. As to quaternary structure, homohexamer.

The catalysed reaction is (2Z,4E)-2-hydroxyhexa-2,4-dienedioate = (3E)-2-oxohex-3-enedioate. It functions in the pathway aromatic compound metabolism; salicylate degradation. Its function is as follows. Catalyzes the ketonization of 2-hydroxymuconate stereoselectively to yield 2-oxo-3-hexenedioate. The chain is 2-hydroxymuconate tautomerase (nahJ) from Pseudomonas putida (Arthrobacter siderocapsulatus).